A 602-amino-acid chain; its full sequence is Threonine--tRNA ligase (602 aa).

The segment at 208–499 is catalytic; the sequence is DHRKLGTELK…LTEHCAGEFP (292 aa). Cys-300, His-351, and His-476 together coordinate Zn(2+).

The protein belongs to the class-II aminoacyl-tRNA synthetase family. In terms of assembly, homodimer. Zn(2+) serves as cofactor.

It localises to the cytoplasm. It catalyses the reaction tRNA(Thr) + L-threonine + ATP = L-threonyl-tRNA(Thr) + AMP + diphosphate + H(+). Catalyzes the attachment of threonine to tRNA(Thr) in a two-step reaction: L-threonine is first activated by ATP to form Thr-AMP and then transferred to the acceptor end of tRNA(Thr). Also edits incorrectly charged L-seryl-tRNA(Thr). This is Threonine--tRNA ligase from Campylobacter jejuni subsp. jejuni serotype O:2 (strain ATCC 700819 / NCTC 11168).